The following is a 629-amino-acid chain: tRNA uridine 5-carboxymethylaminomethyl modification enzyme MnmG (629 aa).

13 to 18 (GGGHAG) provides a ligand contact to FAD. 273-287 (GPRYCPSIEDKINRF) contributes to the NAD(+) binding site.

It belongs to the MnmG family. As to quaternary structure, homodimer. Heterotetramer of two MnmE and two MnmG subunits. FAD is required as a cofactor.

The protein resides in the cytoplasm. NAD-binding protein involved in the addition of a carboxymethylaminomethyl (cmnm) group at the wobble position (U34) of certain tRNAs, forming tRNA-cmnm(5)s(2)U34. This is tRNA uridine 5-carboxymethylaminomethyl modification enzyme MnmG from Shewanella piezotolerans (strain WP3 / JCM 13877).